Reading from the N-terminus, the 361-residue chain is Biotin synthase (361 aa).

A disordered region spans residues 14 to 38; sequence AQRTPEPLPPTSQGLARPSHDVVRG. The 230-residue stretch at 86–315 folds into the Radical SAM core domain; sequence HKGGPAALCG…ARDILVCGGR (230 aa). The [4Fe-4S] cluster site is built by Cys-104, Cys-108, and Cys-111. 2 residues coordinate [2Fe-2S] cluster: Cys-180 and Cys-240.

It belongs to the radical SAM superfamily. Biotin synthase family. As to quaternary structure, homodimer. [4Fe-4S] cluster is required as a cofactor. The cofactor is [2Fe-2S] cluster.

The enzyme catalyses (4R,5S)-dethiobiotin + (sulfur carrier)-SH + 2 reduced [2Fe-2S]-[ferredoxin] + 2 S-adenosyl-L-methionine = (sulfur carrier)-H + biotin + 2 5'-deoxyadenosine + 2 L-methionine + 2 oxidized [2Fe-2S]-[ferredoxin]. Its pathway is cofactor biosynthesis; biotin biosynthesis; biotin from 7,8-diaminononanoate: step 2/2. Catalyzes the conversion of dethiobiotin (DTB) to biotin by the insertion of a sulfur atom into dethiobiotin via a radical-based mechanism. The polypeptide is Biotin synthase (Nitratidesulfovibrio vulgaris (strain DP4) (Desulfovibrio vulgaris)).